The primary structure comprises 147 residues: Nucleoside diphosphate kinase (147 aa).

Residues Lys-9, Phe-57, Arg-85, Thr-91, Arg-102, and Asn-112 each coordinate ATP. Catalysis depends on His-115, which acts as the Pros-phosphohistidine intermediate.

It belongs to the NDK family. In terms of assembly, homotetramer. Mg(2+) serves as cofactor.

Its subcellular location is the cytoplasm. The enzyme catalyses a 2'-deoxyribonucleoside 5'-diphosphate + ATP = a 2'-deoxyribonucleoside 5'-triphosphate + ADP. It catalyses the reaction a ribonucleoside 5'-diphosphate + ATP = a ribonucleoside 5'-triphosphate + ADP. Major role in the synthesis of nucleoside triphosphates other than ATP. The ATP gamma phosphate is transferred to the NDP beta phosphate via a ping-pong mechanism, using a phosphorylated active-site intermediate. This Listeria welshimeri serovar 6b (strain ATCC 35897 / DSM 20650 / CCUG 15529 / CIP 8149 / NCTC 11857 / SLCC 5334 / V8) protein is Nucleoside diphosphate kinase.